A 212-amino-acid chain; its full sequence is MSIGILGTKLGMTQIFDNKTGVAIPVTVVQAGPCPVTQVKTKKTDGYESIQVGYKTVKEKALNKPLLGHLAKAGVSPLRHLIEYRLEDASAYTLGQEITADIFQEGDLVDVAGTTIGRGFSGYQKRHNFKRGNMTHGSKNHRLPGSTGAGTTPGRVFPGKRMAGQYGSTQVTIRKLSVVKIDSERNLILIKGAVPGKPGTLLNITPAKKFGK.

Positions 131–155 (RGNMTHGSKNHRLPGSTGAGTTPGR) are disordered.

It belongs to the universal ribosomal protein uL3 family. Part of the 50S ribosomal subunit. Forms a cluster with proteins L14 and L19.

In terms of biological role, one of the primary rRNA binding proteins, it binds directly near the 3'-end of the 23S rRNA, where it nucleates assembly of the 50S subunit. The protein is Large ribosomal subunit protein uL3 of Microcystis aeruginosa (strain NIES-843 / IAM M-2473).